Here is a 175-residue protein sequence, read N- to C-terminus: Large ribosomal subunit protein uL16 (175 aa).

This sequence belongs to the universal ribosomal protein uL16 family.

This chain is Large ribosomal subunit protein uL16, found in Caldivirga maquilingensis (strain ATCC 700844 / DSM 13496 / JCM 10307 / IC-167).